A 296-amino-acid chain; its full sequence is 33 kDa chaperonin (296 aa).

2 disulfides stabilise this stretch: cysteine 233/cysteine 235 and cysteine 267/cysteine 270.

This sequence belongs to the HSP33 family. Post-translationally, under oxidizing conditions two disulfide bonds are formed involving the reactive cysteines. Under reducing conditions zinc is bound to the reactive cysteines and the protein is inactive.

Its subcellular location is the cytoplasm. Its function is as follows. Redox regulated molecular chaperone. Protects both thermally unfolding and oxidatively damaged proteins from irreversible aggregation. Plays an important role in the bacterial defense system toward oxidative stress. This is 33 kDa chaperonin from Actinobacillus pleuropneumoniae serotype 5b (strain L20).